We begin with the raw amino-acid sequence, 222 residues long: N-(5'-phosphoribosyl)anthranilate isomerase (222 aa).

Belongs to the TrpF family.

The catalysed reaction is N-(5-phospho-beta-D-ribosyl)anthranilate = 1-(2-carboxyphenylamino)-1-deoxy-D-ribulose 5-phosphate. It functions in the pathway amino-acid biosynthesis; L-tryptophan biosynthesis; L-tryptophan from chorismate: step 3/5. The sequence is that of N-(5'-phosphoribosyl)anthranilate isomerase from Gloeobacter violaceus (strain ATCC 29082 / PCC 7421).